We begin with the raw amino-acid sequence, 269 residues long: Histone deacetylase HDT1 (269 aa).

The tract at residues 97–269 (PFEEEEDDED…HSKAKHSAGK (173 aa)) is disordered. 2 stretches are compositionally biased toward acidic residues: residues 98 to 115 (FEEE…DEDI) and 153 to 179 (KDDE…DSEE). Residues 228–238 (PSKQASKTPKS) show a composition bias toward polar residues. The segment at 242-265 (HHCKPCNRSFGSEGALDSHSKAKH) adopts a C2H2-type zinc-finger fold.

The protein belongs to the histone deacetylase HD2 family. In terms of tissue distribution, predominantly expressed in ovaries. Accumulates predominantly in the micropylar region of the ovule's integument.

The protein localises to the nucleus. It localises to the nucleolus. Its function is as follows. Mediates the deacetylation of lysine residues on the N-terminal part of the core histones (H2A, H2B, H3 and H4). Histone deacetylation gives a tag for epigenetic repression and plays an important role in transcriptional regulation, cell cycle progression and developmental events. This Solanum chacoense (Chaco potato) protein is Histone deacetylase HDT1 (HDT1).